The sequence spans 1015 residues: DNA ligase 3 (1015 aa).

A PARP-type zinc finger spans residues 94–186 (FCVDYAKRGT…QISQHIADLS (93 aa)). Zn(2+) is bound by residues Cys-106, Cys-109, His-140, and Cys-143. Phosphoserine is present on residues Ser-211, Ser-217, Ser-228, and Ser-244. The interval 229 to 255 (GFSAAKPNNSEQAPSSPAPGTSLSASK) is disordered. The segment covering 234-253 (KPNNSEQAPSSPAPGTSLSA) has biased composition (polar residues). Interaction with DNA regions lie at residues 279 to 282 (PSYN), 323 to 328 (VYNLND), 393 to 396 (TKED), and 426 to 432 (KMNSGAK). Glu-511 is a binding site for ATP. The N6-AMP-lysine intermediate role is filled by Lys-513. ATP is bound by residues Arg-518 and Arg-533. The Mg(2+) site is built by Glu-565 and Glu-660. Positions 665, 676, and 680 each coordinate ATP. Residues 849 to 926 (DEASPTTGGS…KSSPVKVGMK (78 aa)) form a disordered region. Positions 854 to 884 (TTGGSSGENEGTAGSAGPCKGPPSKSSASAK) are enriched in low complexity. Residue Ser-919 is modified to Phosphoserine. Positions 939 to 1015 (VLLDVFTGVR…IRKRRLIAPC (77 aa)) constitute a BRCT domain.

This sequence belongs to the ATP-dependent DNA ligase family. As to quaternary structure, isoform 3 interacts (via BRCT domain) with the nuclear DNA-repair protein XRCC1. Interacts with POLG. Interacts with POLB. Mg(2+) is required as a cofactor. The alpha isoform is expressed in all tissues, while the beta isoform is expressed only in the testis.

The protein resides in the nucleus. It catalyses the reaction ATP + (deoxyribonucleotide)n-3'-hydroxyl + 5'-phospho-(deoxyribonucleotide)m = (deoxyribonucleotide)n+m + AMP + diphosphate.. Its function is as follows. The alpha isoform interacts with DNA-repair protein XRCC1 and can correct defective DNA strand-break repair and sister chromatid exchange following treatment with ionizing radiation and alkylating agents. The beta isoform does not interact with XRCC1 and may be specifically involved in the completion of homologous recombination events that occur during meiotic prophase. This Mus musculus (Mouse) protein is DNA ligase 3 (Lig3).